The following is a 246-amino-acid chain: TVP38/TMEM64 family membrane protein MT0653 (246 aa).

Transmembrane regions (helical) follow at residues 19–39, 57–77, 83–103, 157–177, and 196–216; these read LVVF…TDVI, LTYV…PILA, LFGP…TAVV, AFGT…IGSA, and LLAS…AFAA.

It belongs to the TVP38/TMEM64 family.

It is found in the cell membrane. The chain is TVP38/TMEM64 family membrane protein MT0653 from Mycobacterium tuberculosis (strain CDC 1551 / Oshkosh).